A 349-amino-acid polypeptide reads, in one-letter code: Putative F-box/kelch-repeat protein At4g02310 (349 aa).

Positions 11 to 58 (SLFSLLPNDIVLNILARVPRWYHPILSCVSKNLRFLVSSSELKITRSL) constitute an F-box domain. The Kelch repeat unit spans residues 154 to 204 (KIYVFGGIDDMNKRYYEGIHAQVFDLKTQTWHVGPNLSVKLACLNRSVVTP).

The chain is Putative F-box/kelch-repeat protein At4g02310 from Arabidopsis thaliana (Mouse-ear cress).